The sequence spans 275 residues: Dermonecrotic toxin LhSicTox-alphaVI1ii (275 aa).

Residue His-5 is part of the active site. Residues Glu-25 and Asp-27 each coordinate Mg(2+). The active-site Nucleophile is His-41. Cystine bridges form between Cys-45–Cys-51 and Cys-47–Cys-192. A Mg(2+)-binding site is contributed by Asp-85.

The protein belongs to the arthropod phospholipase D family. Class II subfamily. Requires Mg(2+) as cofactor. Expressed by the venom gland.

It localises to the secreted. The enzyme catalyses an N-(acyl)-sphingosylphosphocholine = an N-(acyl)-sphingosyl-1,3-cyclic phosphate + choline. It catalyses the reaction an N-(acyl)-sphingosylphosphoethanolamine = an N-(acyl)-sphingosyl-1,3-cyclic phosphate + ethanolamine. The catalysed reaction is a 1-acyl-sn-glycero-3-phosphocholine = a 1-acyl-sn-glycero-2,3-cyclic phosphate + choline. It carries out the reaction a 1-acyl-sn-glycero-3-phosphoethanolamine = a 1-acyl-sn-glycero-2,3-cyclic phosphate + ethanolamine. In terms of biological role, dermonecrotic toxins cleave the phosphodiester linkage between the phosphate and headgroup of certain phospholipids (sphingolipid and lysolipid substrates), forming an alcohol (often choline) and a cyclic phosphate. This toxin acts on sphingomyelin (SM). It may also act on ceramide phosphoethanolamine (CPE), lysophosphatidylcholine (LPC) and lysophosphatidylethanolamine (LPE), but not on lysophosphatidylserine (LPS), and lysophosphatidylglycerol (LPG). It acts by transphosphatidylation, releasing exclusively cyclic phosphate products as second products. Induces dermonecrosis, hemolysis, increased vascular permeability, edema, inflammatory response, and platelet aggregation. In Loxosceles hirsuta (Recluse spider), this protein is Dermonecrotic toxin LhSicTox-alphaVI1ii.